A 72-amino-acid polypeptide reads, in one-letter code: ATP synthase subunit c (72 aa).

2 consecutive transmembrane segments (helical) span residues 1–21 (MSLGVLAAAIAVGLGALGAGI) and 48–68 (MFIGVALVEALPIIGVVFSFI).

Belongs to the ATPase C chain family. F-type ATPases have 2 components, F(1) - the catalytic core - and F(0) - the membrane proton channel. F(1) has five subunits: alpha(3), beta(3), gamma(1), delta(1), epsilon(1). F(0) has three main subunits: a(1), b(2) and c(10-14). The alpha and beta chains form an alternating ring which encloses part of the gamma chain. F(1) is attached to F(0) by a central stalk formed by the gamma and epsilon chains, while a peripheral stalk is formed by the delta and b chains.

Its subcellular location is the cell membrane. Functionally, f(1)F(0) ATP synthase produces ATP from ADP in the presence of a proton or sodium gradient. F-type ATPases consist of two structural domains, F(1) containing the extramembraneous catalytic core and F(0) containing the membrane proton channel, linked together by a central stalk and a peripheral stalk. During catalysis, ATP synthesis in the catalytic domain of F(1) is coupled via a rotary mechanism of the central stalk subunits to proton translocation. In terms of biological role, key component of the F(0) channel; it plays a direct role in translocation across the membrane. A homomeric c-ring of between 10-14 subunits forms the central stalk rotor element with the F(1) delta and epsilon subunits. The protein is ATP synthase subunit c of Bacillus caldotenax.